The sequence spans 473 residues: Glutamate--tRNA ligase 1 (473 aa).

The short motif at 11–21 is the 'HIGH' region element; it reads PSPTGYLHIGG. The segment covering 113–133 has biased composition (basic and acidic residues); that stretch reads KARAEGRPPRYDGRWRDRDPS. Residues 113–136 form a disordered region; the sequence is KARAEGRPPRYDGRWRDRDPSEAP. The 'KMSKS' region signature appears at 240–244; it reads KLSKR. Lysine 243 is an ATP binding site.

Belongs to the class-I aminoacyl-tRNA synthetase family. Glutamate--tRNA ligase type 1 subfamily. As to quaternary structure, monomer.

It is found in the cytoplasm. The catalysed reaction is tRNA(Glu) + L-glutamate + ATP = L-glutamyl-tRNA(Glu) + AMP + diphosphate. Its function is as follows. Catalyzes the attachment of glutamate to tRNA(Glu) in a two-step reaction: glutamate is first activated by ATP to form Glu-AMP and then transferred to the acceptor end of tRNA(Glu). This is Glutamate--tRNA ligase 1 from Brucella melitensis biotype 1 (strain ATCC 23456 / CCUG 17765 / NCTC 10094 / 16M).